The primary structure comprises 440 residues: Glycerophosphocholine cholinephosphodiesterase ENPP6 (440 aa).

Positions 1–22 are cleaved as a signal peptide; the sequence is MAVKLGTLLLALALGLAQPASA. Asp32, Ser71, and Asn92 together coordinate substrate. Zn(2+)-binding residues include Asp32 and Ser71. The active-site Nucleophile is Ser71. Ser71 carries the phosphoserine modification. Residues Asn100 and Asn118 are each glycosylated (N-linked (GlcNAc...) asparagine). Cys142 and Cys154 are disulfide-bonded. A substrate-binding site is contributed by Asp193. Zn(2+) is bound by residues Asp193, His197, Asp240, and His241. His241 lines the substrate pocket. Asn341 is a glycosylation site (N-linked (GlcNAc...) asparagine). His354 contributes to the substrate binding site. His354 contributes to the Zn(2+) binding site. Residue Asn404 is glycosylated (N-linked (GlcNAc...) asparagine). Ala418 carries GPI-anchor amidated alanine lipidation. A propeptide spans 419-440 (removed in mature form); the sequence is GTTPPVQPSHCALALILLFLLA.

Belongs to the nucleotide pyrophosphatase/phosphodiesterase family. As to quaternary structure, homodimer; disulfide-linked. Homotetramer. Zn(2+) serves as cofactor.

It localises to the cell membrane. It catalyses the reaction sn-glycerol 3-phosphocholine + H2O = phosphocholine + glycerol + H(+). The catalysed reaction is a 1-acyl-sn-glycero-3-phosphocholine + H2O = a 1-acyl-sn-glycerol + phosphocholine + H(+). The enzyme catalyses a 1-O-alkyl-sn-glycero-3-phosphocholine + H2O = a 1-O-alkyl-sn-glycerol + phosphocholine + H(+). It carries out the reaction 1-dodecanoyl-sn-glycero-3-phosphocholine + H2O = 1-dodecanoyl-sn-glycerol + phosphocholine + H(+). It catalyses the reaction 1-hexadecanoyl-sn-glycero-3-phosphocholine + H2O = 1-hexadecanoyl-sn-glycerol + phosphocholine + H(+). The catalysed reaction is 1-(5Z,8Z,11Z,14Z-eicosatetraenoyl)-sn-glycero-3-phosphocholine + H2O = 1-(5Z,8Z,11Z,14Z-eicosatetraenoyl)-sn-glycerol + phosphocholine + H(+). The enzyme catalyses 1-tetradecanoyl-sn-glycero-3-phosphocholine + H2O = 1-tetradecanoyl-sn-glycerol + phosphocholine + H(+). It carries out the reaction sphing-4-enine-phosphocholine + H2O = sphing-4-enine + phosphocholine + H(+). It catalyses the reaction 1-(9Z-octadecenoyl)-sn-glycero-3-phosphocholine + H2O = 1-(9Z-octadecenoyl)-sn-glycerol + phosphocholine + H(+). The catalysed reaction is 1-(9Z,12Z)-octadecadienoyl-sn-glycero-3-phosphocholine + H2O = 1-(9Z,12Z-octadecadienoyl)-sn-glycerol + phosphocholine + H(+). The enzyme catalyses glycero-2-phosphocholine + H2O = phosphocholine + glycerol + H(+). Its activity is regulated as follows. Inhibited by EDTA and EGTA in vitro. In terms of biological role, choline-specific glycerophosphodiesterase that hydrolyzes glycerophosphocholine (GPC) and lysophosphatidylcholine (LPC) and contributes to supplying choline to the cells. Has a preference for LPC with short (12:0 and 14:0) or polyunsaturated (18:2 and 20:4) fatty acids. In vitro, hydrolyzes only choline-containing lysophospholipids, such as sphingosylphosphorylcholine (SPC), platelet-activating factor (PAF) and lysoPAF, but not other lysophospholipids. The sequence is that of Glycerophosphocholine cholinephosphodiesterase ENPP6 from Pongo abelii (Sumatran orangutan).